The primary structure comprises 898 residues: Interleukin enhancer-binding factor 3-B (898 aa).

Positions 5-379 (RIFLNDDRHV…ALKRPIEEDG (375 aa)) constitute a DZF domain. Disordered regions lie at residues 52–87 (QEKD…NPTR), 374–403 (PIEE…PPQA), 468–529 (LPTG…VMEL), 627–651 (PPPQ…RGGF), and 711–799 (GEGY…QGAA). Positions 61-71 (ENPEPEETETT) are enriched in acidic residues. Composition is skewed to basic and acidic residues over residues 72-81 (EEGKDSEAKT) and 374-384 (PIEEDGEDKSP). Residues 372–390 (KRPIEEDGEDKSPSKKKKK) carry the Bipartite nuclear localization signal motif. In terms of domain architecture, DRBM 1 spans 399 to 468 (EPPQAMNALM…AVKVLQDMGL (70 aa)). Residues 474 to 483 (EKEESVDESE) show a composition bias toward acidic residues. The segment covering 489 to 513 (QTPSQTADSEQADSSAGDQSESGKQ) has biased composition (polar residues). The region spanning 521-587 (HGKNPVMELN…ALSALEKLFP (67 aa)) is the DRBM 2 domain. The span at 637-651 (RGGMNRGRGRGRGGF) shows a compositional bias: gly residues. A compositionally biased stretch (pro residues) spans 717–747 (PTPPKPFVKKPPPPQQQQQPPPQHASNPPKP). The segment covering 749-782 (YNQGYQGHQGGQQQQQPQQQQQQTYNQNQYSNYG) has biased composition (low complexity).

A component of a ybx2/frgy2-containing mRNA-ribonucleoprotein (mRNP) complex. Also a component of the CCAAT box transcription factor (CBTF) complex. In terms of processing, phosphorylated. Phosphorylation affects nuclear translocation. Post-translationally, methylated by protein arginine N-methyltransferase 1 (prmt1b) in the RGG-rich domain. Methylation decreases DNA-binding and thereby decreases transcription of the gata2 gene, but does not regulate dsRNA binding or subcellular localization.

Its subcellular location is the nucleus. It localises to the cytoplasm. Its function is as follows. RNA-binding protein that plays an essential role in the biogenesis of circular RNAs (circRNAs) which are produced by back-splicing circularization of pre-mRNAs. Within the nucleus, promotes circRNAs processing by stabilizing the regulatory elements residing in the flanking introns of the circularized exons. Plays thereby a role in the back-splicing of a subset of circRNAs. As a consequence, participates in a wide range of transcriptional and post-transcriptional processes. Binds to poly-U elements and AU-rich elements (AREs) in the 3'-UTR of target mRNAs. Upon viral infection, ILF3 accumulates in the cytoplasm and participates in the innate antiviral response. Mechanistically, ILF3 becomes phosphorylated and activated by the double-stranded RNA-activated protein kinase/PKR which releases ILF3 from cellular mature circRNAs. In turn, unbound ILF3 molecules are able to interact with and thus inhibit viral mRNAs. Has a cytoplasmic role early in development as part of a ribonucleoprotein (mRNP) complex which may regulate mRNA transport and/or translation. Following nuclear localization at the mid-blastula transition, acts as a transcription factor and binds the 5'-CCAAT-3' promoter sequence to regulate transcription of the gata2 gene as a subunit of the CCAAT box transcription factor (CBTF). Its role as an mRNP component negatively regulates its activity as a transcription factor by precluding its nuclear localization. This is Interleukin enhancer-binding factor 3-B (ilf3-b) from Xenopus laevis (African clawed frog).